We begin with the raw amino-acid sequence, 759 residues long: Holliday junction resolvase YEN1 (759 aa).

Disordered stretches follow at residues 62–83 (RSRSRSPTRSPRDSDIDSSQEY), 498–518 (SQSPLKRSNSPSRSKSPTRRQ), and 683–702 (KSRTTNAEKNPPESGLKSRS). Over residues 500–512 (SPLKRSNSPSRSK) the composition is skewed to low complexity. Residues serine 730 and serine 731 each carry the phosphoserine modification.

The protein belongs to the XPG/RAD2 endonuclease family. GEN subfamily.

The protein localises to the cytoplasm. It is found in the nucleus. Functionally, endonuclease which resolves Holliday junctions by the introduction of symmetrically related cuts across the junction point, to produce nicked duplex products in which the nicks can be readily ligated. Four-way DNA intermediates, also known as Holliday junctions, are formed during homologous recombination and DNA repair, and their resolution is necessary for proper chromosome segregation. Involved in DNA-damage repair in vegetative cells. This Saccharomyces cerevisiae (strain ATCC 204508 / S288c) (Baker's yeast) protein is Holliday junction resolvase YEN1 (YEN1).